The primary structure comprises 317 residues: Melanocyte-stimulating hormone receptor (317 aa).

At 1-37 (MPIHGAPRKLLGSLNSTPTATPKLGLAANHTGAPCLE) the chain is on the extracellular side. Asparagine 29 carries N-linked (GlcNAc...) asparagine glycosylation. A helical membrane pass occupies residues 38-63 (VSIPDGLFLSLGLVSLVENVLVVAAI). The Cytoplasmic segment spans residues 64–72 (AKNRNLHSP). The helical transmembrane segment at 73–93 (MYCFICCLALSDLLVSGSNML) threads the bilayer. Over 94-118 (EMAVVLLLEGGALATRASVVQQLHN) the chain is Extracellular. Residues 119-140 (TIDVLTCSSMLCSLCFLGAIAV) form a helical membrane-spanning segment. At 141 to 163 (DRHISIFYALRYHSIMTLPRAQR) the chain is on the cytoplasmic side. A helical transmembrane segment spans residues 164–183 (VIAAIWVASILSSTLFITYY). The Extracellular segment spans residues 184–191 (DHAAVLLC). The chain crosses the membrane as a helical span at residues 192–211 (LVVFFLAMLVLMAVLYVHML). Over 212–240 (ARACQHAQGITRLHKRQPPAHQGFGLRGA) the chain is Cytoplasmic. The chain crosses the membrane as a helical span at residues 241–266 (ATLTILLGIFFLCWGPFFLHLKLVVF). The Extracellular segment spans residues 267 to 279 (CPQHLTCSCIFKN). Residues 280-300 (FKVFLTLIICNTIIDPLIYAF) traverse the membrane as a helical segment. The Cytoplasmic segment spans residues 301–317 (RSQELRRTLKEVLLCSW). The S-palmitoyl cysteine moiety is linked to residue cysteine 315.

This sequence belongs to the G-protein coupled receptor 1 family. Interacts with MGRN1, but does not undergo MGRN1-mediated ubiquitination; this interaction competes with GNAS-binding and thus inhibits agonist-induced cAMP production. Interacts with OPN3; the interaction results in a decrease in MC1R-mediated cAMP signaling and ultimately a decrease in melanin production in melanocytes.

It localises to the cell membrane. Its function is as follows. Receptor for MSH (alpha, beta and gamma) and ACTH. The activity of this receptor is mediated by G proteins which activate adenylate cyclase. Mediates melanogenesis, the production of eumelanin (black/brown) and phaeomelanin (red/yellow), via regulation of cAMP signaling in melanocytes. The sequence is that of Melanocyte-stimulating hormone receptor (MC1R) from Saimiri oerstedii (Central American squirrel monkey).